The sequence spans 335 residues: Probable phosphoglycerate mutase ARB_03491 (335 aa).

The N-terminal stretch at 1 to 24 is a signal peptide; the sequence is MAGRILLGLTLLATSLPLLAMGDA. Catalysis depends on H108, which acts as the Tele-phosphohistidine intermediate. The active-site Proton donor/acceptor is the E211.

Belongs to the phosphoglycerate mutase family.

Its subcellular location is the secreted. Its function is as follows. Probable phosphomutase that may have a function related to the manipulation of phosphate groups on carbohydrates. The chain is Probable phosphoglycerate mutase ARB_03491 from Arthroderma benhamiae (strain ATCC MYA-4681 / CBS 112371) (Trichophyton mentagrophytes).